A 532-amino-acid chain; its full sequence is Deoxyribodipyrimidine photo-lyase (532 aa).

The tract at residues 1-57 is disordered; that stretch reads MDSKKRSHSTGGEAENMESQESKAKRKPLQKHQFSKSNVVQKEEKDKTEGEEKGAEG. The segment covering 24 to 34 has biased composition (basic residues); it reads AKRKPLQKHQF. The segment covering 41–55 has biased composition (basic and acidic residues); sequence QKEEKDKTEGEEKGA. Positions 97 to 229 constitute a Photolyase/cryptochrome alpha/beta domain; that stretch reads QAFVYWMSRD…QVDAHNIVPC (133 aa). R322 lines the DNA pocket. 2 interaction with DNA regions span residues 368-376 and 442-443; these read EAVVRRELA and GF. 468 to 470 contributes to the FAD binding site; the sequence is YLN.

Belongs to the DNA photolyase class-2 family. It depends on FAD as a cofactor.

The enzyme catalyses cyclobutadipyrimidine (in DNA) = 2 pyrimidine residues (in DNA).. Functionally, involved in repair of UV radiation-induced DNA damage. Catalyzes the light-dependent monomerization (300-600 nm) of cyclobutyl pyrimidine dimers (in cis-syn configuration), which are formed between adjacent bases on the same DNA strand upon exposure to ultraviolet radiation. This is Deoxyribodipyrimidine photo-lyase (PHR) from Potorous tridactylus (Potoroo).